We begin with the raw amino-acid sequence, 200 residues long: 3-isopropylmalate dehydratase small subunit (200 aa).

It belongs to the LeuD family. LeuD type 1 subfamily. As to quaternary structure, heterodimer of LeuC and LeuD.

It catalyses the reaction (2R,3S)-3-isopropylmalate = (2S)-2-isopropylmalate. Its pathway is amino-acid biosynthesis; L-leucine biosynthesis; L-leucine from 3-methyl-2-oxobutanoate: step 2/4. In terms of biological role, catalyzes the isomerization between 2-isopropylmalate and 3-isopropylmalate, via the formation of 2-isopropylmaleate. This Vibrio cholerae serotype O1 (strain ATCC 39541 / Classical Ogawa 395 / O395) protein is 3-isopropylmalate dehydratase small subunit.